The primary structure comprises 56 residues: Large ribosomal subunit protein uL30 (56 aa).

Belongs to the universal ribosomal protein uL30 family. In terms of assembly, part of the 50S ribosomal subunit.

The protein is Large ribosomal subunit protein uL30 of Nitratidesulfovibrio vulgaris (strain DSM 19637 / Miyazaki F) (Desulfovibrio vulgaris).